A 998-amino-acid polypeptide reads, in one-letter code: RNA-directed RNA polymerase (998 aa).

Residues 17-34 (LPVGIATVSGCGAVVYCI) traverse the membrane as a helical segment. A cytoplasmic region spans residues 35 to 998 (SKFWGYGAIA…AQPQPSNNRK (964 aa)). Residues 91 to 282 (NGHAVSGAVR…LVYTIPQYVI (192 aa)) are capping. D692 acts as the For RdRp/TNTase activity in catalysis. Residues 901–998 (AKQTRANPGT…AQPQPSNNRK (98 aa)) form a disordered region. Polar residues-rich tracts occupy residues 904-913 (TRANPGTSRP) and 947-961 (GKTNGKSDGNITAGE). The segment covering 971 to 984 (KGPRGGKTNTRRTP) has biased composition (basic residues).

It belongs to the nodaviridae RNA polymerase family. As to quaternary structure, homododecamer. Forms 2 stacked rings of 35-nm in diameter, arranged in a crown-like structure at the opening of virus-induced replication vesicles. Interacts with protein B2. Mn(2+) is required as a cofactor.

Its subcellular location is the host mitochondrion outer membrane. It carries out the reaction RNA(n) + a ribonucleoside 5'-triphosphate = RNA(n+1) + diphosphate. With respect to regulation, drastically inhibited by phosphonoacetic acid. Only slightly inhibited by gliotoxin. Its function is as follows. RNA-dependent RNA polymerase, which replicates the viral genome composed of 2 RNA segments, RNA1 and RNA2. Does not need an exogenous primer. Also possesses a terminal nucleotidyl transferase (TNTase) activity. The TNTase catalyzes the addition of nucleotide to the 3'-end of plus- and minus-stranded RNAs, probably to repair the 3'-end nucleotide loss. Forms the open necked connection to the cytosol of the virus-induced replication vesicles. Mediates viral RNA1 recruitment. The sequence is that of RNA-directed RNA polymerase from Heteronychus arator (African black beetle).